The sequence spans 110 residues: Proline-rich protein 15-like protein A (110 aa).

2 disordered regions span residues 29–51 and 65–110; these read IAGD…TDSQ and TKGR…KSGK. Basic residues predominate over residues 65–85; sequence TKGRHVKVSHSGRFKEKKRIR. Residues 100–110 are compositionally biased toward polar residues; that stretch reads TTANENNKSGK.

It belongs to the PRR15 family.

The polypeptide is Proline-rich protein 15-like protein A (prr15la) (Danio rerio (Zebrafish)).